The sequence spans 657 residues: Pentatricopeptide repeat-containing protein CRR2, chloroplastic (657 aa).

Residues 1–51 (MFLSHPPQVIQPTYHTVNFLPRSPLKPPSCSVALNNPSISSGAGAKISNNQ) constitute a chloroplast transit peptide. PPR repeat units lie at residues 45–75 (AKIS…ESSP), 76–110 (SQQT…GSDQ), 111–141 (DPFL…TRKR), 142–176 (TIYV…GVES), 177–215 (DRFT…GYSS), 216–246 (HVYI…MPVR), 247–277 (NVVS…MMRE), 284–318 (NSVT…GLDS), 319–349 (ILPV…MHDR), 350–384 (DVVS…GASP), 385–420 (TPVT…GIKP), and 421–451 (QIEH…MRTE). The segment at 456 to 531 (VWGSLLGSCR…LPGRCWMEVR (76 aa)) is type E motif. Positions 532 to 562 (RKMYSFVSVDEFNPLMEQIHAFLVKLAEDMK) are type E(+) motif. The type DYW motif stretch occupies residues 563-657 (EKGYIPQTKG…NGVCSCGDYW (95 aa)).

The protein belongs to the PPR family. PCMP-H subfamily.

It is found in the plastid. It localises to the chloroplast. Required for the intergenic processing between chloroplast rsp7 and ndhB transcripts. Necessary for chloroplast NADH dehydrogenase-like (NDH) complex-dependent cyclic electron transport around PSI (CET). In Arabidopsis thaliana (Mouse-ear cress), this protein is Pentatricopeptide repeat-containing protein CRR2, chloroplastic.